Consider the following 582-residue polypeptide: Aspartate--tRNA ligase (582 aa).

Glutamate 174 serves as a coordination point for L-aspartate. The segment at glutamine 198–lysine 201 is aspartate. Residue arginine 220 coordinates L-aspartate. ATP is bound by residues arginine 220–glutamate 222 and glutamine 229. Histidine 443 is an L-aspartate binding site. Glutamate 477 contributes to the ATP binding site. Arginine 484 contacts L-aspartate. Glycine 529 to arginine 532 is an ATP binding site.

It belongs to the class-II aminoacyl-tRNA synthetase family. Type 1 subfamily. In terms of assembly, homodimer.

It localises to the cytoplasm. The enzyme catalyses tRNA(Asp) + L-aspartate + ATP = L-aspartyl-tRNA(Asp) + AMP + diphosphate. Its function is as follows. Catalyzes the attachment of L-aspartate to tRNA(Asp) in a two-step reaction: L-aspartate is first activated by ATP to form Asp-AMP and then transferred to the acceptor end of tRNA(Asp). The sequence is that of Aspartate--tRNA ligase from Streptococcus pyogenes serotype M6 (strain ATCC BAA-946 / MGAS10394).